The sequence spans 476 residues: Glycogen synthase (476 aa).

Position 15 (K15) interacts with ADP-alpha-D-glucose.

Belongs to the glycosyltransferase 1 family. Bacterial/plant glycogen synthase subfamily.

It carries out the reaction [(1-&gt;4)-alpha-D-glucosyl](n) + ADP-alpha-D-glucose = [(1-&gt;4)-alpha-D-glucosyl](n+1) + ADP + H(+). It participates in glycan biosynthesis; glycogen biosynthesis. Its function is as follows. Synthesizes alpha-1,4-glucan chains using ADP-glucose. This is Glycogen synthase from Chlamydia pneumoniae (Chlamydophila pneumoniae).